A 130-amino-acid polypeptide reads, in one-letter code: uncharacterized protein (130 aa).

This is an uncharacterized protein from Escherichia coli (strain K12).